The chain runs to 453 residues: Bifunctional protein GlmU (453 aa).

The tract at residues 1–225 (MNIVILAAGT…EWETLGVNSK (225 aa)) is pyrophosphorylase. Residues 6-9 (LAAG), lysine 20, glutamine 71, 76-77 (GT), 98-100 (YGD), glycine 135, glutamate 150, asparagine 165, and asparagine 223 contribute to the UDP-N-acetyl-alpha-D-glucosamine site. Residue aspartate 100 coordinates Mg(2+). Asparagine 223 is a Mg(2+) binding site. The linker stretch occupies residues 226 to 246 (QQLAELERIHQRNVADDLLVA). Residues 247-453 (GVTIADPARI…GYVRPTKKKS (207 aa)) are N-acetyltransferase. UDP-N-acetyl-alpha-D-glucosamine-binding residues include arginine 329 and lysine 347. Residue histidine 359 is the Proton acceptor of the active site. UDP-N-acetyl-alpha-D-glucosamine is bound by residues tyrosine 362 and asparagine 373. Residues alanine 376, 382–383 (NY), serine 401, and alanine 419 each bind acetyl-CoA.

In the N-terminal section; belongs to the N-acetylglucosamine-1-phosphate uridyltransferase family. It in the C-terminal section; belongs to the transferase hexapeptide repeat family. Homotrimer. Mg(2+) serves as cofactor.

Its subcellular location is the cytoplasm. It carries out the reaction alpha-D-glucosamine 1-phosphate + acetyl-CoA = N-acetyl-alpha-D-glucosamine 1-phosphate + CoA + H(+). It catalyses the reaction N-acetyl-alpha-D-glucosamine 1-phosphate + UTP + H(+) = UDP-N-acetyl-alpha-D-glucosamine + diphosphate. Its pathway is nucleotide-sugar biosynthesis; UDP-N-acetyl-alpha-D-glucosamine biosynthesis; N-acetyl-alpha-D-glucosamine 1-phosphate from alpha-D-glucosamine 6-phosphate (route II): step 2/2. It participates in nucleotide-sugar biosynthesis; UDP-N-acetyl-alpha-D-glucosamine biosynthesis; UDP-N-acetyl-alpha-D-glucosamine from N-acetyl-alpha-D-glucosamine 1-phosphate: step 1/1. The protein operates within bacterial outer membrane biogenesis; LPS lipid A biosynthesis. Functionally, catalyzes the last two sequential reactions in the de novo biosynthetic pathway for UDP-N-acetylglucosamine (UDP-GlcNAc). The C-terminal domain catalyzes the transfer of acetyl group from acetyl coenzyme A to glucosamine-1-phosphate (GlcN-1-P) to produce N-acetylglucosamine-1-phosphate (GlcNAc-1-P), which is converted into UDP-GlcNAc by the transfer of uridine 5-monophosphate (from uridine 5-triphosphate), a reaction catalyzed by the N-terminal domain. This Paraburkholderia phymatum (strain DSM 17167 / CIP 108236 / LMG 21445 / STM815) (Burkholderia phymatum) protein is Bifunctional protein GlmU.